Reading from the N-terminus, the 465-residue chain is Argininosuccinate lyase (465 aa).

Belongs to the lyase 1 family. Argininosuccinate lyase subfamily.

The protein resides in the cytoplasm. The catalysed reaction is 2-(N(omega)-L-arginino)succinate = fumarate + L-arginine. Its pathway is amino-acid biosynthesis; L-arginine biosynthesis; L-arginine from L-ornithine and carbamoyl phosphate: step 3/3. In Rhodopseudomonas palustris (strain BisB18), this protein is Argininosuccinate lyase.